Here is a 907-residue protein sequence, read N- to C-terminus: Avirulence protein A (907 aa).

Polar residues-rich tracts occupy residues 1-11 and 124-136; these read MWNVSKSSNNL and AGSN…SSDP. Disordered regions lie at residues 1 to 47 and 116 to 157; these read MWNV…HDQL and NDDF…KKSY.

This chain is Avirulence protein A (avrA), found in Pseudomonas savastanoi pv. glycinea (Pseudomonas syringae pv. glycinea).